The sequence spans 193 residues: Putative 3-methyladenine DNA glycosylase (193 aa).

Belongs to the DNA glycosylase MPG family.

This chain is Putative 3-methyladenine DNA glycosylase, found in Francisella tularensis subsp. holarctica (strain FTNF002-00 / FTA).